The chain runs to 599 residues: NADH-quinone oxidoreductase subunit C/D (599 aa).

The interval methionine 1–glutamate 190 is NADH dehydrogenase I subunit C. The NADH dehydrogenase I subunit D stretch occupies residues aspartate 214–arginine 599.

It in the N-terminal section; belongs to the complex I 30 kDa subunit family. The protein in the C-terminal section; belongs to the complex I 49 kDa subunit family. In terms of assembly, NDH-1 is composed of 13 different subunits. Subunits NuoB, CD, E, F, and G constitute the peripheral sector of the complex.

It localises to the cell inner membrane. It catalyses the reaction a quinone + NADH + 5 H(+)(in) = a quinol + NAD(+) + 4 H(+)(out). Functionally, NDH-1 shuttles electrons from NADH, via FMN and iron-sulfur (Fe-S) centers, to quinones in the respiratory chain. The immediate electron acceptor for the enzyme in this species is believed to be ubiquinone. Couples the redox reaction to proton translocation (for every two electrons transferred, four hydrogen ions are translocated across the cytoplasmic membrane), and thus conserves the redox energy in a proton gradient. The sequence is that of NADH-quinone oxidoreductase subunit C/D from Photorhabdus laumondii subsp. laumondii (strain DSM 15139 / CIP 105565 / TT01) (Photorhabdus luminescens subsp. laumondii).